A 372-amino-acid polypeptide reads, in one-letter code: Queuine tRNA-ribosyltransferase (372 aa).

Asp92 acts as the Proton acceptor in catalysis. Substrate-binding positions include 92–96 (DSGGY), Asp146, Gln188, and Gly215. The RNA binding stretch occupies residues 246-252 (GIGSLKE). Asp265 functions as the Nucleophile in the catalytic mechanism. Positions 270–274 (TRLGR) are RNA binding; important for wobble base 34 recognition. Cys303, Cys305, Cys308, and His334 together coordinate Zn(2+).

The protein belongs to the queuine tRNA-ribosyltransferase family. Homodimer. Within each dimer, one monomer is responsible for RNA recognition and catalysis, while the other monomer binds to the replacement base PreQ1. Zn(2+) is required as a cofactor.

The enzyme catalyses 7-aminomethyl-7-carbaguanine + guanosine(34) in tRNA = 7-aminomethyl-7-carbaguanosine(34) in tRNA + guanine. The protein operates within tRNA modification; tRNA-queuosine biosynthesis. Catalyzes the base-exchange of a guanine (G) residue with the queuine precursor 7-aminomethyl-7-deazaguanine (PreQ1) at position 34 (anticodon wobble position) in tRNAs with GU(N) anticodons (tRNA-Asp, -Asn, -His and -Tyr). Catalysis occurs through a double-displacement mechanism. The nucleophile active site attacks the C1' of nucleotide 34 to detach the guanine base from the RNA, forming a covalent enzyme-RNA intermediate. The proton acceptor active site deprotonates the incoming PreQ1, allowing a nucleophilic attack on the C1' of the ribose to form the product. After dissociation, two additional enzymatic reactions on the tRNA convert PreQ1 to queuine (Q), resulting in the hypermodified nucleoside queuosine (7-(((4,5-cis-dihydroxy-2-cyclopenten-1-yl)amino)methyl)-7-deazaguanosine). This Prochlorococcus marinus (strain AS9601) protein is Queuine tRNA-ribosyltransferase.